The primary structure comprises 722 residues: Disintegrin and metalloproteinase domain-containing protein 21 (722 aa).

A signal peptide spans 1 to 31 (MAVDGTLVYIRVTLLLLWLGVFLSISGYCQA). Residues 32-196 (GPSQHFTSPE…FEEAENSALE (165 aa)) constitute a propeptide that is removed on maturation. N-linked (GlcNAc...) asparagine glycosylation is present at Asn164. The Cysteine switch motif lies at 171 to 178 (MRCGLTEK). A Zn(2+)-binding site is contributed by Cys173. The Extracellular portion of the chain corresponds to 197–681 (PKSAGDWWTH…DSGPASAKRG (485 aa)). In terms of domain architecture, Peptidase M12B spans 208–398 (WFLELVVVVN…NQGSCLHNPP (191 aa)). A glycan (N-linked (GlcNAc...) asparagine) is linked at Asn227. Disulfide bonds link Cys316/Cys393, Cys356/Cys378, and Cys358/Cys363. His341 is a binding site for Zn(2+). Glu342 is an active-site residue. Zn(2+) is bound by residues His345 and His351. N-linked (GlcNAc...) asparagine glycosylation is found at Asn377, Asn437, Asn478, Asn546, and Asn600. Residues 406–492 (LKRCGNGVVE…QCPEDRYVQD (87 aa)) form the Disintegrin domain. An intrachain disulfide couples Cys464 to Cys484. 3 disulfide bridges follow: Cys634/Cys645, Cys639/Cys651, and Cys653/Cys662. The 30-residue stretch at 634 to 663 (CLPETCNMKGICNNKHHCHCGYGWSPPYCQ) folds into the EGF-like domain. A helical membrane pass occupies residues 682-702 (VFLPLIVIPSLSVLTFLFTVG). Residues 703-722 (LLMYLRQCSGPKETKAHSSG) lie on the Cytoplasmic side of the membrane.

Requires Zn(2+) as cofactor. Post-translationally, has no obvious cleavage site for furin endopeptidase, suggesting that the proteolytic processing is regulated.

It is found in the membrane. Functionally, may be involved in sperm maturation and/or fertilization. May also be involved in epithelia functions associated with establishing and maintaining gradients of ions or nutrients. This chain is Disintegrin and metalloproteinase domain-containing protein 21 (ADAM21), found in Homo sapiens (Human).